Here is a 199-residue protein sequence, read N- to C-terminus: Fe/S biogenesis protein NfuA (199 aa).

[4Fe-4S] cluster is bound by residues C151 and C154.

It belongs to the NfuA family. As to quaternary structure, homodimer. The cofactor is [4Fe-4S] cluster.

Involved in iron-sulfur cluster biogenesis. Binds a 4Fe-4S cluster, can transfer this cluster to apoproteins, and thereby intervenes in the maturation of Fe/S proteins. Could also act as a scaffold/chaperone for damaged Fe/S proteins. The polypeptide is Fe/S biogenesis protein NfuA (Xanthomonas axonopodis pv. citri (strain 306)).